We begin with the raw amino-acid sequence, 536 residues long: Phosphoenolpyruvate carboxykinase (ATP) (536 aa).

3 residues coordinate substrate: Arg61, Tyr195, and Lys201. ATP contacts are provided by residues Lys201, His220, and 236–244; that span reads GLSGTGKTT. The Mn(2+) site is built by Lys201 and His220. Asp257 is a Mn(2+) binding site. ATP is bound by residues Glu285, Arg322, and Thr447. Position 322 (Arg322) interacts with substrate.

The protein belongs to the phosphoenolpyruvate carboxykinase (ATP) family. Mn(2+) serves as cofactor.

It localises to the cytoplasm. The enzyme catalyses oxaloacetate + ATP = phosphoenolpyruvate + ADP + CO2. The protein operates within carbohydrate biosynthesis; gluconeogenesis. Its function is as follows. Involved in the gluconeogenesis. Catalyzes the conversion of oxaloacetate (OAA) to phosphoenolpyruvate (PEP) through direct phosphoryl transfer between the nucleoside triphosphate and OAA. This is Phosphoenolpyruvate carboxykinase (ATP) from Rhizobium leguminosarum bv. trifolii (strain WSM2304).